A 102-amino-acid polypeptide reads, in one-letter code: Monothiol glutaredoxin-S8 (102 aa).

The Glutaredoxin domain maps to M1–W101. [2Fe-2S] cluster is bound at residue C21. Positions A99–L102 match the Responsive for interaction with TGA factors motif.

Belongs to the glutaredoxin family. CC-type subfamily.

The protein resides in the cytoplasm. Its subcellular location is the nucleus. Its function is as follows. May only reduce GSH-thiol disulfides, but not protein disulfides. In Arabidopsis thaliana (Mouse-ear cress), this protein is Monothiol glutaredoxin-S8 (GRXS8).